Here is a 750-residue protein sequence, read N- to C-terminus: Photosystem I P700 chlorophyll a apoprotein A1 (750 aa).

Transmembrane regions (helical) follow at residues 70 to 93 (VFSAHFGQLSIIFLWLSGMYFHGA), 156 to 179 (LYCTAIGALIFAALMLFAGWFHYH), 195 to 219 (LNHHLAGLLGLGSLSWAGHQIHVSL), 291 to 309 (IAHHHLAIAILFLIAGHMY), 346 to 369 (WHAQLSLNLAMLGSTTIVVAHHMY), 385 to 411 (LSLFTHHMWIGGFLIVGAAAHAAIFMV), 433 to 455 (AIISHLNWVCIFLGFHSFGLYIH), and 531 to 549 (FLVHHIHAFTIHVTVLILL). 2 residues coordinate [4Fe-4S] cluster: cysteine 573 and cysteine 582. 2 helical membrane passes run 589–610 (HVFLGLFWMYNAISVVIFHFSW) and 664–686 (LSAYGLFFLGAHFVWAFSLMFLF). Position 675 (histidine 675) interacts with chlorophyll a'. Chlorophyll a contacts are provided by methionine 683 and tyrosine 691. Phylloquinone is bound at residue tryptophan 692. A helical membrane pass occupies residues 724-744 (AVGVTHYLLGGIATTWAFFLA).

The protein belongs to the PsaA/PsaB family. In terms of assembly, the PsaA/B heterodimer binds the P700 chlorophyll special pair and subsequent electron acceptors. PSI consists of a core antenna complex that captures photons, and an electron transfer chain that converts photonic excitation into a charge separation. The eukaryotic PSI reaction center is composed of at least 11 subunits. P700 is a chlorophyll a/chlorophyll a' dimer, A0 is one or more chlorophyll a, A1 is one or both phylloquinones and FX is a shared 4Fe-4S iron-sulfur center. serves as cofactor.

Its subcellular location is the plastid. It localises to the chloroplast thylakoid membrane. The catalysed reaction is reduced [plastocyanin] + hnu + oxidized [2Fe-2S]-[ferredoxin] = oxidized [plastocyanin] + reduced [2Fe-2S]-[ferredoxin]. Functionally, psaA and PsaB bind P700, the primary electron donor of photosystem I (PSI), as well as the electron acceptors A0, A1 and FX. PSI is a plastocyanin-ferredoxin oxidoreductase, converting photonic excitation into a charge separation, which transfers an electron from the donor P700 chlorophyll pair to the spectroscopically characterized acceptors A0, A1, FX, FA and FB in turn. Oxidized P700 is reduced on the lumenal side of the thylakoid membrane by plastocyanin. In Triticum aestivum (Wheat), this protein is Photosystem I P700 chlorophyll a apoprotein A1.